Consider the following 590-residue polypeptide: Arginine--tRNA ligase (590 aa).

Positions 132-142 match the 'HIGH' region motif; the sequence is PNTNKPLHLGH.

Belongs to the class-I aminoacyl-tRNA synthetase family. In terms of assembly, monomer.

It is found in the cytoplasm. The catalysed reaction is tRNA(Arg) + L-arginine + ATP = L-arginyl-tRNA(Arg) + AMP + diphosphate. This is Arginine--tRNA ligase from Treponema denticola (strain ATCC 35405 / DSM 14222 / CIP 103919 / JCM 8153 / KCTC 15104).